Reading from the N-terminus, the 401-residue chain is Carbamoyl phosphate synthase small chain (401 aa).

The interval 1–203 (MTETAPWTTR…KGYGTLGEAD (203 aa)) is CPSase. 3 residues coordinate L-glutamine: Ser-56, Gly-255, and Gly-257. The Glutamine amidotransferase type-1 domain maps to 207–395 (HVVCVDFGVK…VNLLRENKGE (189 aa)). Catalysis depends on Cys-284, which acts as the Nucleophile. Residues Leu-285, Gln-288, Asn-326, Gly-328, and Phe-329 each contribute to the L-glutamine site. Active-site residues include His-368 and Glu-370.

It belongs to the CarA family. As to quaternary structure, composed of two chains; the small (or glutamine) chain promotes the hydrolysis of glutamine to ammonia, which is used by the large (or ammonia) chain to synthesize carbamoyl phosphate. Tetramer of heterodimers (alpha,beta)4.

It carries out the reaction hydrogencarbonate + L-glutamine + 2 ATP + H2O = carbamoyl phosphate + L-glutamate + 2 ADP + phosphate + 2 H(+). It catalyses the reaction L-glutamine + H2O = L-glutamate + NH4(+). Its pathway is amino-acid biosynthesis; L-arginine biosynthesis; carbamoyl phosphate from bicarbonate: step 1/1. It functions in the pathway pyrimidine metabolism; UMP biosynthesis via de novo pathway; (S)-dihydroorotate from bicarbonate: step 1/3. Small subunit of the glutamine-dependent carbamoyl phosphate synthetase (CPSase). CPSase catalyzes the formation of carbamoyl phosphate from the ammonia moiety of glutamine, carbonate, and phosphate donated by ATP, constituting the first step of 2 biosynthetic pathways, one leading to arginine and/or urea and the other to pyrimidine nucleotides. The small subunit (glutamine amidotransferase) binds and cleaves glutamine to supply the large subunit with the substrate ammonia. In Agrobacterium fabrum (strain C58 / ATCC 33970) (Agrobacterium tumefaciens (strain C58)), this protein is Carbamoyl phosphate synthase small chain.